A 520-amino-acid chain; its full sequence is Maturase K (520 aa).

The protein belongs to the intron maturase 2 family. MatK subfamily.

The protein localises to the plastid. Its subcellular location is the chloroplast. Usually encoded in the trnK tRNA gene intron. Probably assists in splicing its own and other chloroplast group II introns. The chain is Maturase K from Maianthemum dilatatum (False lily-of-the-valley).